The following is a 268-amino-acid chain: Interleukin-1 alpha (268 aa).

Positions 1–112 (MAKVPDLFED…NTEEEIIKPR (112 aa)) are excised as a propeptide. The residue at position 82 (Lys82) is an N6-acetyllysine. Residues 82 to 86 (KKRRL) are nuclear localization signal (NLS). Ser87 carries the post-translational modification Phosphoserine. 2 N-linked (GlcNAc...) asparagine glycosylation sites follow: Asn102 and Asn141.

Belongs to the IL-1 family. Monomer. Interacts with TMED10; the interaction mediates the translocation from the cytoplasm into the ERGIC (endoplasmic reticulum-Golgi intermediate compartment) and thereby secretion. Interacts with IL1R1. Interacts with S100A13; this interaction is the first step in the export of IL1A, followed by direct translocation of this complex across the plasma membrane. In terms of processing, acetylated within its nuclear localization sequence, which impacts subcellular localization. Post-translationally, proteolytic processed by CAPN1 in a calcium-dependent manner. Cleavage from 31 kDa precursor to 18 kDa biologically active molecules. Phosphorylated. Phosphorylation greatly enhances susceptibility to digestion and promotes the conversion of pre-IL1A alpha to the biologically active IL1A.

Its subcellular location is the nucleus. It is found in the cytoplasm. The protein localises to the secreted. Functionally, cytokine constitutively present intracellularly in nearly all resting non-hematopoietic cells that plays an important role in inflammation and bridges the innate and adaptive immune systems. After binding to its receptor IL1R1 together with its accessory protein IL1RAP, forms the high affinity interleukin-1 receptor complex. Signaling involves the recruitment of adapter molecules such as MYD88, IRAK1 or IRAK4. In turn, mediates the activation of NF-kappa-B and the three MAPK pathways p38, p42/p44 and JNK pathways. Within the cell, acts as an alarmin and cell death results in its liberation in the extracellular space after disruption of the cell membrane to induce inflammation and alert the host to injury or damage. In addition to its role as a danger signal, which occurs when the cytokine is passively released by cell necrosis, directly senses DNA damage and acts as signal for genotoxic stress without loss of cell integrity. The protein is Interleukin-1 alpha (IL1A) of Bubalus carabanensis (Swamp type water buffalo).